Reading from the N-terminus, the 652-residue chain is tRNA 5-methylaminomethyl-2-thiouridine biosynthesis bifunctional protein MnmC (652 aa).

A tRNA (mnm(5)s(2)U34)-methyltransferase region spans residues 1-235; it reads MPDRLVPATL…EPALRVGEYA (235 aa). Positions 259–652 are FAD-dependent cmnm(5)s(2)U34 oxidoreductase; sequence IGAGLAGCAV…IRALRGRQIG (394 aa).

It in the N-terminal section; belongs to the methyltransferase superfamily. tRNA (mnm(5)s(2)U34)-methyltransferase family. The protein in the C-terminal section; belongs to the DAO family. Requires FAD as cofactor.

The protein localises to the cytoplasm. It catalyses the reaction 5-aminomethyl-2-thiouridine(34) in tRNA + S-adenosyl-L-methionine = 5-methylaminomethyl-2-thiouridine(34) in tRNA + S-adenosyl-L-homocysteine + H(+). In terms of biological role, catalyzes the last two steps in the biosynthesis of 5-methylaminomethyl-2-thiouridine (mnm(5)s(2)U) at the wobble position (U34) in tRNA. Catalyzes the FAD-dependent demodification of cmnm(5)s(2)U34 to nm(5)s(2)U34, followed by the transfer of a methyl group from S-adenosyl-L-methionine to nm(5)s(2)U34, to form mnm(5)s(2)U34. The chain is tRNA 5-methylaminomethyl-2-thiouridine biosynthesis bifunctional protein MnmC from Burkholderia ambifaria (strain MC40-6).